Consider the following 268-residue polypeptide: Testis-specific serine/threonine-protein kinase 3 (268 aa).

A Protein kinase domain is found at 10–265 (YQLGKTIGEG…IEEVSWHPWL (256 aa)). ATP-binding positions include 16–24 (IGEGTYSKV) and Lys39. Asp134 serves as the catalytic Proton acceptor. Residue Ser166 is modified to Phosphoserine; by autocatalysis. Thr168 is subject to Phosphothreonine; by PDPK1.

The protein belongs to the protein kinase superfamily. CAMK Ser/Thr protein kinase family. Mg(2+) serves as cofactor. It depends on Mn(2+) as a cofactor. Autophosphorylated at Ser-166. Phosphorylation at Thr-168 by PDPK1 activates the serine/threonine protein kinase activity. Developmentally expressed in testicular germ cells. In adult testis, expression was detected in round and condensing spermatids, but not in meiotic pachytene spermatocytes. Not expressed in brain, ovary, kidney, liver or early embryonic cells.

It is found in the cell projection. The protein localises to the cilium. The protein resides in the flagellum. It carries out the reaction L-seryl-[protein] + ATP = O-phospho-L-seryl-[protein] + ADP + H(+). It catalyses the reaction L-threonyl-[protein] + ATP = O-phospho-L-threonyl-[protein] + ADP + H(+). Activated by phosphorylation on Thr-168 by PDPK1. Functionally, serine/threonine protein kinase required for spermatid development and male fertility. In Mus musculus (Mouse), this protein is Testis-specific serine/threonine-protein kinase 3.